A 261-amino-acid chain; its full sequence is Carnitinyl-CoA dehydratase (261 aa).

Catalysis depends on Glu-111, which acts as the Nucleophile. Glu-131 (proton acceptor) is an active-site residue.

This sequence belongs to the enoyl-CoA hydratase/isomerase family.

The enzyme catalyses (R)-carnitinyl-CoA = crotonobetainyl-CoA + H2O. It participates in amine and polyamine metabolism; carnitine metabolism. Its function is as follows. Catalyzes the reversible dehydration of L-carnitinyl-CoA to crotonobetainyl-CoA. The polypeptide is Carnitinyl-CoA dehydratase (Salmonella typhi).